Consider the following 500-residue polypeptide: Maturase K (500 aa).

It belongs to the intron maturase 2 family. MatK subfamily.

The protein localises to the plastid. It is found in the chloroplast. In terms of biological role, usually encoded in the trnK tRNA gene intron. Probably assists in splicing its own and other chloroplast group II introns. The sequence is that of Maturase K from Argentina anserina (Silverweed cinquefoil).